The sequence spans 732 residues: E3 ubiquitin-protein ligase TRIM56 (732 aa).

Residues 21–60 (CKICLEQLRVPKTLPCLHTYCQDCLAQLAEGSRLRCPECR) form an RING-type zinc finger. A B box-type zinc finger spans residues 164–205 (RQAAQCPQHPGEALRFLCQPCSQLLCRECRLDPHLDHPCLPL). The Zn(2+) site is built by Cys-169, His-172, Cys-192, and His-197. A coiled-coil region spans residues 211–286 (ARRPGLEELL…LRAHVEAAEE (76 aa)). The segment covering 374 to 384 (LPQKDSGKDGA) has biased composition (basic and acidic residues). Residues 374–462 (LPQKDSGKDG…PAPGPNLEGS (89 aa)) form a disordered region. The segment covering 389-405 (GDATQPQSRDGVQTPNQ) has biased composition (polar residues). Thr-402 is subject to Phosphothreonine. Basic and acidic residues predominate over residues 407 to 416 (DGAKTPKESR). Thr-419 is subject to Phosphothreonine. Over residues 434-446 (SNKKRKFKGRLKS) the composition is skewed to basic residues. Ser-452 is modified (phosphoserine).

Belongs to the TRIM/RBCC family. As to quaternary structure, interacts with STING1. Interacts with TICAM1.

Its subcellular location is the cytoplasm. It catalyses the reaction S-ubiquitinyl-[E2 ubiquitin-conjugating enzyme]-L-cysteine + [acceptor protein]-L-lysine = [E2 ubiquitin-conjugating enzyme]-L-cysteine + N(6)-ubiquitinyl-[acceptor protein]-L-lysine.. The protein operates within protein modification; protein ubiquitination. Its function is as follows. E3 ubiquitin-protein ligase that plays a key role in innate antiviral immunity by mediating ubiquitination of CGAS and STING1. In response to pathogen- and host-derived double-stranded DNA (dsDNA), targets STING1 to 'Lys-63'-linked ubiquitination, thereby promoting its homodimerization, a step required for the production of type I interferon IFN-beta. Also mediate monoubiquitination of CGAS, thereby promoting CGAS oligomerization and subsequent activation. Independently of its E3 ubiquitin ligase activity, positive regulator of TLR3 signaling. Potentiates extracellular double stranded RNA (dsRNA)-induced expression of IFNB1 and interferon-stimulated genes ISG15, IFIT1/ISG56, CXCL10, OASL and CCL5/RANTES. Restricts bovine viral diarrhea virus (BVDV) replication. The protein is E3 ubiquitin-protein ligase TRIM56 of Bos taurus (Bovine).